Here is a 192-residue protein sequence, read N- to C-terminus: Cytochrome c4 (192 aa).

2 Cytochrome c domains span residues 12-90 (GDPQ…ATQP) and 99-191 (ELAS…QGLS). Heme c is bound by residues Cys25, Cys28, His29, Cys120, Cys123, and His124.

Binds 2 heme c groups covalently per subunit.

It localises to the periplasm. Its function is as follows. Diheme, high potential cytochrome c believed to be an intermediate electron donor in an anaerobic electron transport chain. The protein is Cytochrome c4 of Thiocapsa roseopersicina.